The following is a 324-amino-acid chain: tRNA N6-adenosine threonylcarbamoyltransferase (324 aa).

Residues H107, H111, and Y127 each coordinate Fe cation. Residues 127-131 (YVSGG), D159, G172, E176, and N257 contribute to the substrate site. Residue D285 participates in Fe cation binding.

Belongs to the KAE1 / TsaD family. In terms of assembly, monomer. Component of the KEOPS complex that consists of Kae1, Bud32, Cgi121 and Pcc1; the whole complex dimerizes. It depends on Fe(2+) as a cofactor.

It localises to the cytoplasm. The catalysed reaction is L-threonylcarbamoyladenylate + adenosine(37) in tRNA = N(6)-L-threonylcarbamoyladenosine(37) in tRNA + AMP + H(+). Required for the formation of a threonylcarbamoyl group on adenosine at position 37 (t(6)A37) in tRNAs that read codons beginning with adenine. Is a component of the KEOPS complex that is probably involved in the transfer of the threonylcarbamoyl moiety of threonylcarbamoyl-AMP (TC-AMP) to the N6 group of A37. Kae1 likely plays a direct catalytic role in this reaction, but requires other protein(s) of the complex to fulfill this activity. The protein is tRNA N6-adenosine threonylcarbamoyltransferase of Pyrococcus horikoshii (strain ATCC 700860 / DSM 12428 / JCM 9974 / NBRC 100139 / OT-3).